A 1129-amino-acid polypeptide reads, in one-letter code: Phytochrome A type 3 (1129 aa).

Residues 1–21 (MSSSRPASSSSSRNRQSSQAR) are compositionally biased toward low complexity. The disordered stretch occupies residues 1 to 24 (MSSSRPASSSSSRNRQSSQARVLA). Residues 217-402 (SMEVLCNTVV…VFAVHVNREF (186 aa)) enclose the GAF domain. Cys322 provides a ligand contact to phytochromobilin. PAS domains follow at residues 618-688 (VTSE…LQGK) and 748-822 (VEGD…VSLC). Residues 902 to 1122 (YMRHAINNPL…TFIITAELAS (221 aa)) form the Histidine kinase domain.

Belongs to the phytochrome family. As to quaternary structure, homodimer. In terms of processing, contains one covalently linked phytochromobilin chromophore.

Regulatory photoreceptor which exists in two forms that are reversibly interconvertible by light: the Pr form that absorbs maximally in the red region of the spectrum and the Pfr form that absorbs maximally in the far-red region. Photoconversion of Pr to Pfr induces an array of morphogenic responses, whereas reconversion of Pfr to Pr cancels the induction of those responses. Pfr controls the expression of a number of nuclear genes including those encoding the small subunit of ribulose-bisphosphate carboxylase, chlorophyll A/B binding protein, protochlorophyllide reductase, rRNA, etc. It also controls the expression of its own gene(s) in a negative feedback fashion. The polypeptide is Phytochrome A type 3 (PHYA3) (Avena sativa (Oat)).